We begin with the raw amino-acid sequence, 196 residues long: Large ribosomal subunit protein mL66 (196 aa).

A mitochondrion-targeting transit peptide spans 1 to 34 (MAALKALVSGCGRLLRGLLAGPAATSWSRLPARG).

This sequence belongs to the bacterial ribosomal protein bS18 family. Mitochondrion-specific ribosomal protein mL66 subfamily. In terms of assembly, component of the mitochondrial large ribosomal subunit (mt-LSU). Mature mammalian 55S mitochondrial ribosomes consist of a small (28S) and a large (39S) subunit. The 28S small subunit contains a 12S ribosomal RNA (12S mt-rRNA) and 30 different proteins. The 39S large subunit contains a 16S rRNA (16S mt-rRNA), a copy of mitochondrial valine transfer RNA (mt-tRNA(Val)), which plays an integral structural role, and 52 different proteins. mL66 forms a zinc-binding site with uL10m.

The protein localises to the mitochondrion. The chain is Large ribosomal subunit protein mL66 (MRPS18A) from Homo sapiens (Human).